Here is a 192-residue protein sequence, read N- to C-terminus: NADH dehydrogenase [ubiquinone] iron-sulfur protein 3 (192 aa).

It belongs to the complex I 30 kDa subunit family. As to quaternary structure, complex I is composed of about 45 different subunits. This is a component of the iron-sulfur (IP) fragment of the enzyme.

The protein resides in the mitochondrion inner membrane. The catalysed reaction is a ubiquinone + NADH + 5 H(+)(in) = a ubiquinol + NAD(+) + 4 H(+)(out). Core subunit of the mitochondrial membrane respiratory chain NADH dehydrogenase (Complex I) that is believed to belong to the minimal assembly required for catalysis. Complex I functions in the transfer of electrons from NADH to the respiratory chain. The immediate electron acceptor for the enzyme is believed to be ubiquinone. This is NADH dehydrogenase [ubiquinone] iron-sulfur protein 3 (NAD9) from Beta vulgaris (Sugar beet).